The chain runs to 418 residues: Serpin A9 (418 aa).

The signal sequence occupies residues 1 to 25 (MGSSSFYRVLLLVGFCAPIFCMLSS). Residues asparagine 103, asparagine 213, and asparagine 224 are each glycosylated (N-linked (GlcNAc...) asparagine).

It belongs to the serpin family.

It is found in the secreted. The polypeptide is Serpin A9 (Serpina9) (Mus musculus (Mouse)).